The chain runs to 291 residues: tRNA dimethylallyltransferase (291 aa).

9 to 16 (GTTASGKS) serves as a coordination point for ATP. Substrate is bound at residue 11-16 (TASGKS). The tract at residues 34 to 37 (DSLA) is interaction with substrate tRNA.

It belongs to the IPP transferase family. As to quaternary structure, monomer. Requires Mg(2+) as cofactor.

The catalysed reaction is adenosine(37) in tRNA + dimethylallyl diphosphate = N(6)-dimethylallyladenosine(37) in tRNA + diphosphate. Functionally, catalyzes the transfer of a dimethylallyl group onto the adenine at position 37 in tRNAs that read codons beginning with uridine, leading to the formation of N6-(dimethylallyl)adenosine (i(6)A). The sequence is that of tRNA dimethylallyltransferase from Campylobacter concisus (strain 13826).